A 43-amino-acid polypeptide reads, in one-letter code: MESATVLSITFAVILIAITGLAVYTSFGPPSAELGDPFDDHED.

The helical transmembrane segment at Ala-4–Tyr-24 threads the bilayer.

The protein belongs to the PsbN family.

It is found in the cellular thylakoid membrane. Its function is as follows. May play a role in photosystem I and II biogenesis. In Synechocystis sp. (strain ATCC 27184 / PCC 6803 / Kazusa), this protein is Protein PsbN.